Consider the following 350-residue polypeptide: C5a anaphylatoxin chemotactic receptor 1 (350 aa).

The Extracellular portion of the chain corresponds to 1 to 36; the sequence is APMENSTYDYTNYDSLGTLDPSTPVDNTVRRLRPTT. Residue Asn5 is glycosylated (N-linked (GlcNAc...) asparagine). A sulfotyrosine mark is found at Tyr10 and Tyr13. A helical transmembrane segment spans residues 37-63; that stretch reads IVALVIYMAVFLVGVPGNALVVWVTAL. The Cytoplasmic segment spans residues 64–68; that stretch reads EAKRT. Residues 69–92 traverse the membrane as a helical segment; that stretch reads VNAIWFLNLAVADLLSCLALPILF. The Extracellular portion of the chain corresponds to 93–109; that stretch reads VSIIQEGHWPFGRAACS. Cys108 and Cys187 are oxidised to a cystine. Residues 110–131 traverse the membrane as a helical segment; the sequence is VLPSLILLNMYASILLLATISA. Residues 132-152 are Cytoplasmic-facing; that stretch reads DRFLLVFNPIWCQNTRGAGLA. Residues 153–173 traverse the membrane as a helical segment; sequence WLACCVAWGLALLLTIPSFLY. Topologically, residues 174 to 200 are extracellular; that stretch reads RKVLQDDYPPKTTCGVDYGHEGVRAER. A helical membrane pass occupies residues 201–226; it reads AVAIVRLVVGFLLPLFTLSVCYTFLL. Topologically, residues 227-242 are cytoplasmic; the sequence is LRTWSRNGTRSTKTLK. Residues 243–265 traverse the membrane as a helical segment; it reads VVVAVVVSFFIFWLPYQVMGMIL. Residues 266–282 are Extracellular-facing; the sequence is ALLHPSSATFRWAIRLD. A helical membrane pass occupies residues 283–303; the sequence is PLCIALAYVNCCINPIIYVVA. The Cytoplasmic segment spans residues 304 to 350; sequence GKGFQGQLRKSLPSLLRNVLAEESVIQGSKSFSRSTVDTVADKCQAV. Phosphoserine occurs at positions 314, 317, 327, 332, 334, and 338.

This sequence belongs to the G-protein coupled receptor 1 family. Homodimer. May also form higher-order oligomers. Interacts (when phosphorylated) with ARRB1 and ARRB2; the interaction is associated with internalization of C5aR. Sulfation plays a critical role in the association of C5aR with C5a, but no significant role in the ability of the receptor to transduce a signal and mobilize calcium in response to a small peptide agonist. Post-translationally, phosphorylated on serine residues in response to C5a binding, resulting in internalization of the receptor and short-term desensitization to C5a.

The protein localises to the cell membrane. It is found in the cytoplasmic vesicle. In terms of biological role, receptor for the chemotactic and inflammatory peptide anaphylatoxin C5a. The ligand interacts with at least two sites on the receptor: a high-affinity site on the extracellular N-terminus, and a second site in the transmembrane region which activates downstream signaling events. Receptor activation stimulates chemotaxis, granule enzyme release, intracellular calcium release and superoxide anion production. The chain is C5a anaphylatoxin chemotactic receptor 1 (C5AR1) from Oryctolagus cuniculus (Rabbit).